Here is a 436-residue protein sequence, read N- to C-terminus: GTPase Der (436 aa).

2 consecutive EngA-type G domains span residues 4-167 and 176-351; these read PVVA…KNIP and VQFC…ENHS. Residues 10-17, 57-61, 119-122, 182-189, 229-233, and 294-297 each bind GTP; these read GRPNVGKS, DTGGI, NKLD, DTAGM, and NKWD. Positions 352 to 436 constitute a KH-like domain; sequence LRVQTNVLND…PIKIFARARK (85 aa).

It belongs to the TRAFAC class TrmE-Era-EngA-EngB-Septin-like GTPase superfamily. EngA (Der) GTPase family. As to quaternary structure, associates with the 50S ribosomal subunit.

In terms of biological role, GTPase that plays an essential role in the late steps of ribosome biogenesis. The polypeptide is GTPase Der (Bacillus velezensis (strain DSM 23117 / BGSC 10A6 / LMG 26770 / FZB42) (Bacillus amyloliquefaciens subsp. plantarum)).